A 101-amino-acid polypeptide reads, in one-letter code: Enhancer of yellow 2 transcription factor (101 aa).

This sequence belongs to the ENY2 family. Component of the nuclear pore complex (NPC)-associated AMEX complex (anchoring and mRNA export complex), composed of at least e(y)2 and xmas-2. Component of the SAGA transcription coactivator-HAT complexes, at least composed of Ada2b, e(y)2, Pcaf/Gcn5, Taf10 and Nipped-A/Trrap. Within the SAGA complex, e(y)2, Sgf11, and not/nonstop form an additional subcomplex of SAGA called the DUB module (deubiquitination module). Component of the THO complex, composed of at least e(y)2, HPR1, THO2, THOC5, THOC6 and THOC7. Interacts with e(y)1. Interacts with su(Hw) (via zinc fingers). Interacts with xmas-2; required for localization to the nuclear periphery. Interacts with the nuclear pore complex (NPC).

The protein localises to the nucleus. Its subcellular location is the nucleoplasm. It is found in the cytoplasm. Its function is as follows. Involved in mRNA export coupled transcription activation by association with both the AMEX and the SAGA complexes. The SAGA complex is a multiprotein complex that activates transcription by remodeling chromatin and mediating histone acetylation and deubiquitination. Within the SAGA complex, participates in a subcomplex that specifically deubiquitinates histone H2B. The SAGA complex is recruited to specific gene promoters by activators, where it is required for transcription. Required for nuclear receptor-mediated transactivation. Involved in transcription elongation by recruiting the THO complex onto nascent mRNA. The AMEX complex functions in docking export-competent ribonucleoprotein particles (mRNPs) to the nuclear entrance of the nuclear pore complex (nuclear basket). AMEX participates in mRNA export and accurate chromatin positioning in the nucleus by tethering genes to the nuclear periphery. This is Enhancer of yellow 2 transcription factor from Drosophila erecta (Fruit fly).